Here is a 280-residue protein sequence, read N- to C-terminus: 2-dehydro-3-deoxyphosphooctonate aldolase (280 aa).

This sequence belongs to the KdsA family.

The protein resides in the cytoplasm. It catalyses the reaction D-arabinose 5-phosphate + phosphoenolpyruvate + H2O = 3-deoxy-alpha-D-manno-2-octulosonate-8-phosphate + phosphate. It functions in the pathway carbohydrate biosynthesis; 3-deoxy-D-manno-octulosonate biosynthesis; 3-deoxy-D-manno-octulosonate from D-ribulose 5-phosphate: step 2/3. It participates in bacterial outer membrane biogenesis; lipopolysaccharide biosynthesis. The chain is 2-dehydro-3-deoxyphosphooctonate aldolase from Desulfotalea psychrophila (strain LSv54 / DSM 12343).